We begin with the raw amino-acid sequence, 367 residues long: Chorismate synthase (367 aa).

Positions 41 to 60 are disordered; sequence FTHDLQRRASGKSRHTSARR. Positions 48 and 54 each coordinate NADP(+). FMN contacts are provided by residues 125–127, 238–239, glycine 278, 293–297, and arginine 319; these read RSS, NA, and KPTSS.

The protein belongs to the chorismate synthase family. As to quaternary structure, homotetramer. FMNH2 is required as a cofactor.

It catalyses the reaction 5-O-(1-carboxyvinyl)-3-phosphoshikimate = chorismate + phosphate. It participates in metabolic intermediate biosynthesis; chorismate biosynthesis; chorismate from D-erythrose 4-phosphate and phosphoenolpyruvate: step 7/7. In terms of biological role, catalyzes the anti-1,4-elimination of the C-3 phosphate and the C-6 proR hydrogen from 5-enolpyruvylshikimate-3-phosphate (EPSP) to yield chorismate, which is the branch point compound that serves as the starting substrate for the three terminal pathways of aromatic amino acid biosynthesis. This reaction introduces a second double bond into the aromatic ring system. The chain is Chorismate synthase from Xanthomonas axonopodis pv. citri (strain 306).